The sequence spans 220 residues: V-set and transmembrane domain-containing protein 2-like protein (220 aa).

An N-terminal signal peptide occupies residues 1 to 24 (MGAPLAAALGALHYLALFLQLGGA). The region spanning 41–158 (ALFTETPHDM…DGGRGVPRVL (118 aa)) is the Ig-like domain. A disulfide bond links Cys-62 and Cys-142. Over residues 165-180 (PAPPRAPRPRGQPPGE) the composition is skewed to pro residues. Positions 165-220 (PAPPRAPRPRGQPPGEEPGRGPTLLFLIILPGTGSGTPREAEPHQPHAGGCPARQS) are disordered.

The polypeptide is V-set and transmembrane domain-containing protein 2-like protein (Vstm2l) (Mus musculus (Mouse)).